Consider the following 89-residue polypeptide: Large ribosomal subunit protein bL27 (89 aa).

The tract at residues 1–21 is disordered; the sequence is MAHKKAGGSSRNGRDSAGRRL.

This sequence belongs to the bacterial ribosomal protein bL27 family.

This chain is Large ribosomal subunit protein bL27, found in Novosphingobium aromaticivorans (strain ATCC 700278 / DSM 12444 / CCUG 56034 / CIP 105152 / NBRC 16084 / F199).